The sequence spans 137 residues: Protein LTO1 homolog (137 aa).

Residue Ala2 is modified to N-acetylalanine. Position 4 is a phosphoserine (Ser4). Residues 22-58 (GYREGYEEGSSLGVMEGRQHGTLHGAKIGSEIGCYQG) form a deca-GX3 motif; required for interaction with YAE1 and the CIA complex region.

It belongs to the LTO1 family. Forms a complex with YAE1. Interacts with PYCR1 and PYCR2. Widely expressed. Highly expressed in placenta, kidney and skeletal muscle.

It localises to the nucleus. Functionally, the complex LTO1:YAE1 functions as a target specific adapter that probably recruits apo-ABCE1 to the cytosolic iron-sulfur protein assembly (CIA) complex machinery. May be required for biogenesis of the large ribosomal subunit and initiation of translation. May play a role in the regulation of proline metabolism and ROS production. This chain is Protein LTO1 homolog, found in Homo sapiens (Human).